Reading from the N-terminus, the 535-residue chain is Prolyl 4-hydroxylase subunit alpha-2 (535 aa).

Residues 1–21 form the signal peptide; it reads MKLWVSALLMAWFGVLSCVQA. Asn115 carries an N-linked (GlcNAc...) asparagine glycan. Residues 207-240 form a TPR repeat; the sequence is SQVLDYLSYAVFQLGDLHRALELTRRLLSLDPSH. N-linked (GlcNAc...) asparagine glycosylation occurs at Asn264. A Fe2OG dioxygenase domain is found at 412-520; the sequence is TAELLQVANY…KWVSNKWFHE (109 aa). Fe cation contacts are provided by His430 and Asp432. Lys480 carries the N6-succinyllysine modification. His501 lines the Fe cation pocket. Lys511 contacts 2-oxoglutarate.

Belongs to the P4HA family. Heterotetramer of two alpha-2 chains and two beta chains (P4HB) (the beta chain is the multi-functional PDI), where P4HB plays the role of a structural subunit; this tetramer catalyzes the formation of 4-hydroxyproline in collagen. Fe(2+) serves as cofactor. Requires L-ascorbate as cofactor. Expressed in the heart, placenta, lung and pancreas.

Its subcellular location is the endoplasmic reticulum lumen. The catalysed reaction is L-prolyl-[collagen] + 2-oxoglutarate + O2 = trans-4-hydroxy-L-prolyl-[collagen] + succinate + CO2. Inhibited by poly(L-proline) only at very high concentrations. Its function is as follows. Catalyzes the post-translational formation of 4-hydroxyproline in -Xaa-Pro-Gly- sequences in collagens and other proteins. The protein is Prolyl 4-hydroxylase subunit alpha-2 (P4HA2) of Homo sapiens (Human).